Consider the following 623-residue polypeptide: Glutathione import ATP-binding protein GsiA (623 aa).

2 consecutive ABC transporter domains span residues 15 to 269 (VENL…RALL) and 314 to 564 (LRVR…RKLL). Residues 49 to 56 (GESGSGKS) and 357 to 364 (GESGSGKS) each bind ATP.

The protein belongs to the ABC transporter superfamily. Glutathione importer (TC 3.A.1.5.11) family. The complex is composed of two ATP-binding proteins (GsiA), two transmembrane proteins (GsiC and GsiD) and a solute-binding protein (GsiB).

Its subcellular location is the cell inner membrane. The enzyme catalyses glutathione(out) + ATP + H2O = glutathione(in) + ADP + phosphate + H(+). Part of the ABC transporter complex GsiABCD involved in glutathione import. Responsible for energy coupling to the transport system. This chain is Glutathione import ATP-binding protein GsiA, found in Shigella boydii serotype 4 (strain Sb227).